Here is a 213-residue protein sequence, read N- to C-terminus: uncharacterized protein (213 aa).

This is an uncharacterized protein from Bacillus subtilis (strain 168).